We begin with the raw amino-acid sequence, 508 residues long: MGLPWYRVHTVVLNDPGRLLAVHIMHTALVSGWAGSMALYELAVFDPSDPVLDPMWRQGMFVIPFMTRLGITDSWGGWSISGGTVTNPGIWSYEGVAGTHIVFSGLCFLAAIWHWVYWDLAIFSDDRTGKPSLDLPKIFGIHLFLAGVACFGFGAFHVTGLYGPGIWVSDPYGLTGKVQAVNPAWGAEGFDPFVPGGIASHHIAAGTLGILAGLFHLSVRPPQRLYKGLRMGNIETVLSSSIAAVFFAAFVVAGTMWYGSATTPIELFGPTRYQWDQGYFQQEIYRRVSNGLSENLSLSEAWSKIPEKLAFYDYIGNNPAKGGLFRAGSMDNGDGIAVGWLGHPVFRDKEGRELFVRRMPTFFETFPVVLVDEEGIVRADVPFRRAESKYSVEQVGVTVEFYGGELNGVSYSDPATVKKYARRSQLGEIFELDRATLKSDGVFRSSPRGWFTFGHATFALLFFFGHIWHGARTLFRDVFAGIDPDLDAQVEFGTFQKVGDPTTRKQAV.

Transmembrane regions (helical) follow at residues 21 to 36 (AVHIMHTALVSGWAGS), 101 to 115 (IVFSGLCFLAAIWHW), 140 to 156 (GIHLFLAGVACFGFGAF), 203 to 218 (IAAGTLGILAGLFHLS), 237 to 252 (VLSSSIAAVFFAAFVV), and 457 to 472 (TFALLFFFGHIWHGAR).

It belongs to the PsbB/PsbC family. PsbB subfamily. As to quaternary structure, PSII is composed of 1 copy each of membrane proteins PsbA, PsbB, PsbC, PsbD, PsbE, PsbF, PsbH, PsbI, PsbJ, PsbK, PsbL, PsbM, PsbT, PsbX, PsbY, PsbZ, Psb30/Ycf12, at least 3 peripheral proteins of the oxygen-evolving complex and a large number of cofactors. It forms dimeric complexes. It depends on Binds multiple chlorophylls. PSII binds additional chlorophylls, carotenoids and specific lipids. as a cofactor.

Its subcellular location is the plastid. The protein localises to the chloroplast thylakoid membrane. One of the components of the core complex of photosystem II (PSII). It binds chlorophyll and helps catalyze the primary light-induced photochemical processes of PSII. PSII is a light-driven water:plastoquinone oxidoreductase, using light energy to abstract electrons from H(2)O, generating O(2) and a proton gradient subsequently used for ATP formation. The polypeptide is Photosystem II CP47 reaction center protein (Brachypodium distachyon (Purple false brome)).